The following is a 325-amino-acid chain: L-lactate dehydrogenase 1 (325 aa).

NAD(+) is bound by residues Val-17, Asp-38, Lys-43, Tyr-68, and 82 to 83; that span reads GA. Residues Gln-85, Arg-91, and 123–126 each bind substrate; that span reads NPVD. NAD(+)-binding positions include 121–123 and Ser-146; that span reads AAN. 151 to 154 lines the substrate pocket; it reads DTAR. Beta-D-fructose 1,6-bisphosphate-binding residues include Arg-156 and His-171. The Proton acceptor role is filled by His-178. Residue Tyr-223 is modified to Phosphotyrosine. Thr-232 serves as a coordination point for substrate.

This sequence belongs to the LDH/MDH superfamily. LDH family. In terms of assembly, homotetramer.

Its subcellular location is the cytoplasm. It catalyses the reaction (S)-lactate + NAD(+) = pyruvate + NADH + H(+). It participates in fermentation; pyruvate fermentation to lactate; (S)-lactate from pyruvate: step 1/1. Allosterically activated by fructose 1,6-bisphosphate (FBP). In terms of biological role, catalyzes the conversion of lactate to pyruvate. The sequence is that of L-lactate dehydrogenase 1 from Lactococcus lactis subsp. lactis (strain IL1403) (Streptococcus lactis).